A 458-amino-acid chain; its full sequence is MAGSSRRAGGRRLQLPLLCLLLQGATAILFAVFVRYNHETDAALWHWGNHSNPDNEFYFRYPSFQDVHTMIFVGFGFLMAFLQRYGFSSVGFTFLLAAFALQWSTLVQGFLHTFHGGHIHIGVESMINADFCAGAVLISFGAILGKTGPAQLLLMALLEVVLFGLNEFVLLSLLGVKDAGGSMTIHTFGAYFGLVLSRVLYRPQLEKSKHRQSSVYHSDLFAMIGTIFLWIFWPSFNSAPTPLGDGQHRTALNTYYSLTASTLSTFALSALVGRDGRLDMVHVQNAALAGGVVVGTSAEMMLTPFGALAAGFLAGTVSTLGFKFFTPILESKFKIQDTCGVHNLHGMPGVLGALLGVLVAGLATHDSYGEGLESVFPLIAEGQRSSTSQALHQLFGLFVTLIFASVGGGLGGLLLRLPFLDSPPDSQCYEDQIYWEVPEEHADLAQGSLRPEEPDTQA.

The Cytoplasmic segment spans residues 1–13 (MAGSSRRAGGRRL). The helical transmembrane segment at 14–34 (QLPLLCLLLQGATAILFAVFV) threads the bilayer. Topologically, residues 35-61 (RYNHETDAALWHWGNHSNPDNEFYFRY) are extracellular. N-linked (GlcNAc...) asparagine glycosylation occurs at N49. A helical membrane pass occupies residues 62-82 (PSFQDVHTMIFVGFGFLMAFL). The Cytoplasmic portion of the chain corresponds to 83-86 (QRYG). The chain crosses the membrane as a helical span at residues 87-107 (FSSVGFTFLLAAFALQWSTLV). Topologically, residues 108–124 (QGFLHTFHGGHIHIGVE) are extracellular. Residues 125-145 (SMINADFCAGAVLISFGAILG) traverse the membrane as a helical segment. Residues 146 to 149 (KTGP) are Cytoplasmic-facing. A helical membrane pass occupies residues 150-170 (AQLLLMALLEVVLFGLNEFVL). Residues 171–178 (LSLLGVKD) lie on the Extracellular side of the membrane. Residues 179 to 201 (AGGSMTIHTFGAYFGLVLSRVLY) form a helical membrane-spanning segment. Topologically, residues 202–219 (RPQLEKSKHRQSSVYHSD) are cytoplasmic. Residues 220–240 (LFAMIGTIFLWIFWPSFNSAP) form a helical membrane-spanning segment. The Extracellular segment spans residues 241–251 (TPLGDGQHRTA). The chain crosses the membrane as a helical span at residues 252-272 (LNTYYSLTASTLSTFALSALV). Topologically, residues 273–282 (GRDGRLDMVH) are cytoplasmic. A helical membrane pass occupies residues 283–303 (VQNAALAGGVVVGTSAEMMLT). Position 304 (P304) is a topological domain, extracellular. A helical transmembrane segment spans residues 305–325 (FGALAAGFLAGTVSTLGFKFF). At 326-346 (TPILESKFKIQDTCGVHNLHG) the chain is on the cytoplasmic side. A helical membrane pass occupies residues 347-367 (MPGVLGALLGVLVAGLATHDS). At 368–393 (YGEGLESVFPLIAEGQRSSTSQALHQ) the chain is on the extracellular side. A helical membrane pass occupies residues 394 to 414 (LFGLFVTLIFASVGGGLGGLL). At 415–458 (LRLPFLDSPPDSQCYEDQIYWEVPEEHADLAQGSLRPEEPDTQA) the chain is on the cytoplasmic side. Residues 416 to 424 (RLPFLDSPP) are interaction with ANK3. Positions 429–432 (YEDQ) match the Basolateral sorting signal motif.

It belongs to the ammonium transporter (TC 2.A.49) family. Rh subfamily. In terms of assembly, interacts (via C-terminus) with ANK2 and ANK3; required for targeting to the basolateral membrane. Post-translationally, N-glycosylated.

It is found in the cell membrane. Its subcellular location is the basolateral cell membrane. It catalyses the reaction NH4(+)(in) = NH4(+)(out). The enzyme catalyses methylamine(out) = methylamine(in). It carries out the reaction CO2(out) = CO2(in). In terms of biological role, ammonium transporter involved in the maintenance of acid-base homeostasis. Transports ammonium and its related derivative methylammonium across the basolateral plasma membrane of epithelial cells likely contributing to renal transepithelial ammonia transport and ammonia metabolism. May transport either NH4(+) or NH3 ammonia species predominantly mediating an electrogenic NH4(+) transport. May act as a CO2 channel providing for renal acid secretion. The polypeptide is Ammonium transporter Rh type B (RHBG) (Sus scrofa (Pig)).